Here is a 729-residue protein sequence, read N- to C-terminus: Fatty acid oxidation complex subunit alpha (729 aa).

Residues 1–189 (MLYKGDTLYL…KIGLVDGVVK (189 aa)) form an enoyl-CoA hydratase/isomerase region. D296 serves as a coordination point for substrate. Positions 311–729 (ETPKQAAVLG…ARPVGSLKTA (419 aa)) are 3-hydroxyacyl-CoA dehydrogenase. NAD(+)-binding positions include M324, D343, 400-402 (VVE), K407, and S429. H450 functions as the For 3-hydroxyacyl-CoA dehydrogenase activity in the catalytic mechanism. N453 serves as a coordination point for NAD(+). The substrate site is built by N500 and Y660. The segment at 708–729 (RHNEPYYPPVEPARPVGSLKTA) is disordered.

In the N-terminal section; belongs to the enoyl-CoA hydratase/isomerase family. This sequence in the C-terminal section; belongs to the 3-hydroxyacyl-CoA dehydrogenase family. In terms of assembly, heterotetramer of two alpha chains (FadB) and two beta chains (FadA).

It catalyses the reaction a (3S)-3-hydroxyacyl-CoA + NAD(+) = a 3-oxoacyl-CoA + NADH + H(+). It carries out the reaction a (3S)-3-hydroxyacyl-CoA = a (2E)-enoyl-CoA + H2O. The catalysed reaction is a 4-saturated-(3S)-3-hydroxyacyl-CoA = a (3E)-enoyl-CoA + H2O. The enzyme catalyses (3S)-3-hydroxybutanoyl-CoA = (3R)-3-hydroxybutanoyl-CoA. It catalyses the reaction a (3Z)-enoyl-CoA = a 4-saturated (2E)-enoyl-CoA. It carries out the reaction a (3E)-enoyl-CoA = a 4-saturated (2E)-enoyl-CoA. Its pathway is lipid metabolism; fatty acid beta-oxidation. Its function is as follows. Involved in the aerobic and anaerobic degradation of long-chain fatty acids via beta-oxidation cycle. Catalyzes the formation of 3-oxoacyl-CoA from enoyl-CoA via L-3-hydroxyacyl-CoA. It can also use D-3-hydroxyacyl-CoA and cis-3-enoyl-CoA as substrate. The sequence is that of Fatty acid oxidation complex subunit alpha from Salmonella typhimurium (strain LT2 / SGSC1412 / ATCC 700720).